The chain runs to 189 residues: Ribosome maturation factor RimP (189 aa).

Belongs to the RimP family.

It is found in the cytoplasm. In terms of biological role, required for maturation of 30S ribosomal subunits. This Corynebacterium kroppenstedtii (strain DSM 44385 / JCM 11950 / CIP 105744 / CCUG 35717) protein is Ribosome maturation factor RimP.